Consider the following 534-residue polypeptide: Peptide chain release factor 3 (534 aa).

In terms of domain architecture, tr-type G spans 9-278; it reads ARRRTFAIIS…FFVEHAPPPQ (270 aa). GTP-binding positions include 18-25, 86-90, and 140-143; these read SHPDAGKT, DTPGH, and NKLD.

It belongs to the TRAFAC class translation factor GTPase superfamily. Classic translation factor GTPase family. PrfC subfamily.

The protein localises to the cytoplasm. In terms of biological role, increases the formation of ribosomal termination complexes and stimulates activities of RF-1 and RF-2. It binds guanine nucleotides and has strong preference for UGA stop codons. It may interact directly with the ribosome. The stimulation of RF-1 and RF-2 is significantly reduced by GTP and GDP, but not by GMP. In Xanthomonas euvesicatoria pv. vesicatoria (strain 85-10) (Xanthomonas campestris pv. vesicatoria), this protein is Peptide chain release factor 3.